Consider the following 380-residue polypeptide: G-protein coupled receptor (380 aa).

Transmembrane regions (helical) follow at residues 26 to 46, 60 to 80, 97 to 117, 145 to 165, 184 to 204, 220 to 240, and 275 to 295; these read VISIFSLTTFVGLAITLYLGI, LVCCDVLIVNAVCLITLPLWV, FAGMFYTMNVYMSVWSCVIVT, VTILTLLVTFIGLFSLTETSI, AALGYTVPWLAIAIMIVHIIL, ILMWMMFTLLVTQGPYYSLSA, and VAMLVCTHALAITRMFSVPLI. Cys-95 and Cys-170 are disulfide-bonded. Residues 328–380 are disordered; it reads SQSKLLRGEENPNYDYSPKSVRIKPLKSPGGGDNSSLKDEGYDEESQNGFSIG.

The protein belongs to the G-protein coupled receptor 1 family.

The protein localises to the host membrane. The protein is G-protein coupled receptor of Elephas maximus (Indian elephant).